The primary structure comprises 335 residues: MKIKATIDRIPGGLMLVPLLLGAILHTAAPGTAEYFGSFTKGIITGTLPILSVWFFCIGASIDLRATGTVLRKSGTLVLTKIAVAWVVALIAAQLLPEYGIEVGMLAGLSTLALVSAMDMTNGGLYASLMNQYGSKEESGAFVLMSVESGPLMTMVILGSAGLASFQPHHFVGAVLPFLIGFALGNLDHDLREFFSRATQTLIPFFGFALGNTINLGVILDTGLLGIAMGLLVIVVTGIPLIIADRLIGGGNGTAGLAASSTAGAAVANPVIIAQMNPAFAKIAPAATALVATCVIVTSILVPILTAMYAKRMGNPMPAQHGASAGKEKMAPEMH.

The next 10 helical transmembrane spans lie at isoleucine 10–proline 30, glycine 42–isoleucine 62, leucine 77–proline 97, glycine 100–methionine 120, alanine 141–alanine 161, leucine 163–alanine 183, glutamine 200–leucine 220, leucine 224–alanine 244, threonine 254–alanine 274, and alanine 289–tyrosine 309.

It belongs to the KdgT transporter family.

The protein localises to the cell inner membrane. The enzyme catalyses 2-dehydro-3-deoxy-D-gluconate(in) + H(+)(in) = 2-dehydro-3-deoxy-D-gluconate(out) + H(+)(out). In terms of biological role, catalyzes the proton-dependent uptake of 2-keto-3-deoxygluconate (KDG) into the cell. The protein is 2-keto-3-deoxygluconate permease of Tolumonas auensis (strain DSM 9187 / NBRC 110442 / TA 4).